Here is a 242-residue protein sequence, read N- to C-terminus: Caspase-14 (242 aa).

Positions 1–5 are excised as a propeptide; it reads MSNPR. Residues H89 and C132 contribute to the active site. Residues 147-152 constitute a propeptide that is removed on maturation; sequence EIVMVI.

The protein belongs to the peptidase C14A family. In terms of assembly, heterodimer of a large and a small subunit, both processed from the precursor; the mature active form is a p17/p10 dimer and the intermediate form a p20/p8 dimer. Maturation by proteolytic processing appears to be a two-step process. The precursor is processed by KLK7 to yield the p20/p8 intermediate form which acts on the precursor to yield the p17/p10 mature form. Initially, cleavage between Ile-152 and Lys-153 has been proposed to yield the large and small subunits of the active enzyme. In terms of tissue distribution, expressed in keratinocytes of adult skin suprabasal layers (from spinous layers to the stratum granulosum and stratum corneum) (at protein level). Expressed in keratinocytes of hair shaft and sebaceous glands (at protein level). In psoriatic skin only expressed at very low levels. The p17/10 mature form is expressed in epidermis stratum corneum, the p20/p8 intermediate form in epidermis upper granular cells of the stratum granulosum.

It localises to the cytoplasm. It is found in the nucleus. Inhibited by caspase-1 inhibitor YVAD-FMK and the pan-caspase inhibitor VAD-FMK. Non-apoptotic caspase involved in epidermal differentiation. Is the predominant caspase in epidermal stratum corneum. Seems to play a role in keratinocyte differentiation and is required for cornification. Regulates maturation of the epidermis by proteolytically processing filaggrin. In vitro has a preference for the substrate [WY]-X-X-D motif and is active on the synthetic caspase substrate WEHD-ACF. Involved in processing of prosaposin in the epidermis. May be involved in retinal pigment epithelium cell barrier function. Involved in DNA degradation in differentiated keratinocytes probably by cleaving DFFA/ICAD leading to liberation of DFFB/CAD. The chain is Caspase-14 (CASP14) from Homo sapiens (Human).